Consider the following 668-residue polypeptide: tRNA 5-methylaminomethyl-2-thiouridine biosynthesis bifunctional protein MnmC (668 aa).

The interval 1-245 is tRNA (mnm(5)s(2)U34)-methyltransferase; it reads MKHYAIQPAN…KREMLCGVME (245 aa). Residues 270–668 are FAD-dependent cmnm(5)s(2)U34 oxidoreductase; that stretch reads IGGGIASALL…LLKGKAVKAG (399 aa).

In the N-terminal section; belongs to the methyltransferase superfamily. tRNA (mnm(5)s(2)U34)-methyltransferase family. It in the C-terminal section; belongs to the DAO family. Requires FAD as cofactor.

Its subcellular location is the cytoplasm. The catalysed reaction is 5-aminomethyl-2-thiouridine(34) in tRNA + S-adenosyl-L-methionine = 5-methylaminomethyl-2-thiouridine(34) in tRNA + S-adenosyl-L-homocysteine + H(+). Functionally, catalyzes the last two steps in the biosynthesis of 5-methylaminomethyl-2-thiouridine (mnm(5)s(2)U) at the wobble position (U34) in tRNA. Catalyzes the FAD-dependent demodification of cmnm(5)s(2)U34 to nm(5)s(2)U34, followed by the transfer of a methyl group from S-adenosyl-L-methionine to nm(5)s(2)U34, to form mnm(5)s(2)U34. This is tRNA 5-methylaminomethyl-2-thiouridine biosynthesis bifunctional protein MnmC from Escherichia coli (strain SMS-3-5 / SECEC).